Consider the following 258-residue polypeptide: MSKRPGDIIISTPGSKVRRRLNFDSPYRNRATAPTVHVTNRKRAWVNRPMYRKPTMYRMYRSPDIPRGCEGPCKVQSFEQRDDVKHLGICKVISDVTRGPGLTHRVGKRFCIKSIYILGKIWLDETIKKQNHTNNVIFYLLRDRRPYGNAPQDFGQIFNMFDNEPSTATIKNDLRDRFQVLRKFHATVVGGPYGMKEQALVKRFYRLNHHVTYNHQEAGKYENHTENALLLYMACTHASNPVYATLKIRIYFYDSIGN.

Residues K3–R20 carry the Bipartite nuclear localization signal motif. Residues R41 to T55 carry the Nuclear localization signal motif. The segment at C69–H86 is a zinc-finger region. Residues L102–L123 carry the Nuclear export signal motif. Residues K202–R249 carry the Bipartite nuclear localization signal motif.

The protein belongs to the geminiviridae capsid protein family. Homomultimer. Binds to single-stranded and double-stranded viral DNA. Interacts (via nuclear localization signals) with host importin alpha-1a.

Its subcellular location is the virion. It is found in the host nucleus. Encapsidates the viral DNA into characteristic twinned ('geminate') particles. Binds the genomic viral ssDNA and shuttles it into and out of the cell nucleus. The CP of bipartite geminiviruses is not required for cell-to-cell or systemic movement. The protein is Capsid protein of African cassava mosaic virus (isolate West Kenyan 844) (ACMV).